A 327-amino-acid chain; its full sequence is Annexin A8 (327 aa).

4 Annexin repeats span residues 21-92 (FNPD…ALMY), 93-164 (PPYS…CLLQ), 177-249 (GLVL…TVVK), and 253-324 (NVHS…NLVG). Ca(2+)-binding residues include methionine 266, glycine 268, glycine 270, and aspartate 310.

This sequence belongs to the annexin family.

Functionally, this protein is an anticoagulant protein that acts as an indirect inhibitor of the thromboplastin-specific complex, which is involved in the blood coagulation cascade. The chain is Annexin A8 (Anxa8) from Mus musculus (Mouse).